The sequence spans 1012 residues: MTGMRGLSVFISDVRNCQNKEAERLRVDKELGNIRTCFKNEKVLTPYKKKKYVWKMLYIHMLGYDVDFGHMEAVSLISAPKYPEKQVGYIVTSCLLNENHDFLKLAINTVRNDIIGRNETFQCLALTLVGNIGGRDFAESLAPDVQKLLISSSCRPLVRKKAALCLLRLFRKNPDAVNVDGWADRMAQLLDERDLGVLTSSTSLLVALVSNNHEAYSSCLPKCVKILERLARNQDVPQEYTYYGIPSPWLQVKAMRALQYFPTIEDPSTRKALFEVLQRILMGTDVVKNVNKNNASHAVLFEALSLVMHLDAEKEMMSQCVALLGKFISVREPNIRYLGLENMTRMLMVTDVQDIIKKHQSQIITSLKDPDISIRRRALDLLYGMCDVSNAKDIVEELLQYLSTAEFSMREELSLKAAILAEKFAPDLSWYVDVILQLIDKAGDFVSDDIWFRVVQFVTNNEDLQPYAASKAREYLDKIAIHETMVKVSAYILGEYGHLLARQPGCSASELFSILHEKLPTISTPTIPILLSTYAKLLMHAQPPDPELQKKVWAVFKKYESCIDVEIQQRAVEYFELSKKGPAFMDVLAEMPKFPERQSSLIKKAENVEDTADQSAIKLRAQQQPSNAMVLADQQPVNGAPPPLKVPILSGSTDPESVARSLSHPNGTLSNIDPQTPSPDLLSDLLGPLAIEAPPGAVSNEQHGPVGAEGVPDEVDGSAIVPVEEQTNTVELIGNIAERFHALCLKDSGVLYEDPHIQIGIKAEWRGHHGRLVLFMGNKNTSPLTSVQALILPPAHLRLDLSPVPDTIPPRAQVQSPLEVMNIRPSRDVAVLDFSYKFGANVVSAKLRIPATLNKFLQPLQLTSEEFFPQWRAISGPPLKLQEVVRGVRPLALPEMANLFNSFHVTICPGLDPNPNNLVASTTFYSESTGAILCLARIETDPADRTQLRMTVGTGDPTLTFELKEFIKEQLITVPMGSRALVPAAGPAPPVAQPPSPAALADDPGAMLAGLL.

HEAT repeat units follow at residues 254–289, 354–391, 393–430, and 525–565; these read AMRALQYFPTIEDPSTRKALFEVLQRILMGTDVVKN, DIIKKHQSQIITSLKDPDISIRRRALDLLYGMCDVSNA, DIVEELLQYLSTAEFSMREELSLKAAILAEKFAPDLSW, and PTIP…CIDV. Residues 652–678 are disordered; the sequence is STDPESVARSLSHPNGTLSNIDPQTPS. Residues 663 to 675 are compositionally biased toward polar residues; it reads SHPNGTLSNIDPQ. One can recognise a GAE domain in the interval 742–841; it reads ALCLKDSGVL…LDFSYKFGAN (100 aa).

This sequence belongs to the adaptor complexes large subunit family. Adaptor protein complex 2 (AP-2) is a heterotetramer composed of two large adaptins (alpha-type and beta-type subunits), a medium adaptin (mu-type subunit) and a small adaptin (sigma-type subunit). Binds to EPSIN2.

Its subcellular location is the membrane. It is found in the coated pit. Its function is as follows. Subunit of the adaptor protein complex 2 (AP-2). Adaptor protein complexes function in protein transport via transport vesicles in different membrane traffic pathways. Adaptor protein complexes are vesicle coat components and appear to be involved in cargo selection and vesicle formation. AP-2 is involved in clathrin-dependent endocytosis in which cargo proteins are incorporated into vesicles surrounded by clathrin (clathrin-coated vesicles, CCVs) which are destined for fusion with the early endosome. The complex binds polyphosphoinositides. The chain is AP-2 complex subunit alpha-1 (ALPHA-ADR) from Arabidopsis thaliana (Mouse-ear cress).